The primary structure comprises 383 residues: ATP phosphoribosyltransferase regulatory subunit (383 aa).

The protein belongs to the class-II aminoacyl-tRNA synthetase family. HisZ subfamily. Heteromultimer composed of HisG and HisZ subunits.

The protein resides in the cytoplasm. It participates in amino-acid biosynthesis; L-histidine biosynthesis; L-histidine from 5-phospho-alpha-D-ribose 1-diphosphate: step 1/9. In terms of biological role, required for the first step of histidine biosynthesis. May allow the feedback regulation of ATP phosphoribosyltransferase activity by histidine. The chain is ATP phosphoribosyltransferase regulatory subunit from Desulfitobacterium hafniense (strain DSM 10664 / DCB-2).